Reading from the N-terminus, the 440-residue chain is 23S rRNA (uracil(1939)-C(5))-methyltransferase RlmD (440 aa).

One can recognise a TRAM domain in the interval 11 to 69 (STLDTKHQPVTIERLDHQGSGLAFLHKKPLFVDGALPGEEVLIQLTENKSKYARGQLIK). Residues cysteine 82, cysteine 88, cysteine 91, and cysteine 169 each coordinate [4Fe-4S] cluster. Positions 272, 301, 306, 322, 349, and 370 each coordinate S-adenosyl-L-methionine. Residue cysteine 396 is the Nucleophile of the active site.

It belongs to the class I-like SAM-binding methyltransferase superfamily. RNA M5U methyltransferase family. RlmD subfamily.

It catalyses the reaction uridine(1939) in 23S rRNA + S-adenosyl-L-methionine = 5-methyluridine(1939) in 23S rRNA + S-adenosyl-L-homocysteine + H(+). Functionally, catalyzes the formation of 5-methyl-uridine at position 1939 (m5U1939) in 23S rRNA. The protein is 23S rRNA (uracil(1939)-C(5))-methyltransferase RlmD of Vibrio cholerae serotype O1 (strain M66-2).